The chain runs to 436 residues: tRNA(Ile)-lysidine synthase (436 aa).

27–32 provides a ligand contact to ATP; that stretch reads SGGVDS.

The protein belongs to the tRNA(Ile)-lysidine synthase family.

Its subcellular location is the cytoplasm. It catalyses the reaction cytidine(34) in tRNA(Ile2) + L-lysine + ATP = lysidine(34) in tRNA(Ile2) + AMP + diphosphate + H(+). Its function is as follows. Ligates lysine onto the cytidine present at position 34 of the AUA codon-specific tRNA(Ile) that contains the anticodon CAU, in an ATP-dependent manner. Cytidine is converted to lysidine, thus changing the amino acid specificity of the tRNA from methionine to isoleucine. The chain is tRNA(Ile)-lysidine synthase from Vibrio vulnificus (strain YJ016).